Consider the following 287-residue polypeptide: 4-hydroxybenzoate octaprenyltransferase (287 aa).

9 helical membrane-spanning segments follow: residues 19–39 (PIGT…ASSG), 43–63 (LQML…GCAI), 94–114 (VVVA…LNIF), 118–138 (LSVL…FLAI), 142–162 (VLGI…LDFI), 167–187 (WVLF…YAMV), 209–229 (VLAI…VAHL), 235–255 (YFLI…KLVS), and 263–283 (FLAF…IVLG).

This sequence belongs to the UbiA prenyltransferase family. It depends on Mg(2+) as a cofactor.

The protein localises to the cell inner membrane. It carries out the reaction all-trans-octaprenyl diphosphate + 4-hydroxybenzoate = 4-hydroxy-3-(all-trans-octaprenyl)benzoate + diphosphate. Its pathway is cofactor biosynthesis; ubiquinone biosynthesis. Catalyzes the prenylation of para-hydroxybenzoate (PHB) with an all-trans polyprenyl group. Mediates the second step in the final reaction sequence of ubiquinone-8 (UQ-8) biosynthesis, which is the condensation of the polyisoprenoid side chain with PHB, generating the first membrane-bound Q intermediate 3-octaprenyl-4-hydroxybenzoate. This Polynucleobacter asymbioticus (strain DSM 18221 / CIP 109841 / QLW-P1DMWA-1) (Polynucleobacter necessarius subsp. asymbioticus) protein is 4-hydroxybenzoate octaprenyltransferase.